The sequence spans 324 residues: tRNA uridine(34) hydroxylase (324 aa).

A Rhodanese domain is found at 145–239 (NDKKTIFIDM…YVHDARKNGL (95 aa)). Catalysis depends on cysteine 199, which acts as the Cysteine persulfide intermediate.

The protein belongs to the TrhO family.

The catalysed reaction is uridine(34) in tRNA + AH2 + O2 = 5-hydroxyuridine(34) in tRNA + A + H2O. Its function is as follows. Catalyzes oxygen-dependent 5-hydroxyuridine (ho5U) modification at position 34 in tRNAs. The sequence is that of tRNA uridine(34) hydroxylase from Buchnera aphidicola subsp. Acyrthosiphon pisum (strain Tuc7).